A 207-amino-acid chain; its full sequence is Gene 66 protein (207 aa).

The chain is Gene 66 protein (66) from Mycobacterium (Mycobacteriophage L5).